The following is a 500-amino-acid chain: Cytochrome P450 6B4 (500 aa).

Cysteine 443 lines the heme pocket.

The protein belongs to the cytochrome P450 family. Requires heme as cofactor.

It is found in the endoplasmic reticulum membrane. The protein localises to the microsome membrane. It carries out the reaction an organic molecule + reduced [NADPH--hemoprotein reductase] + O2 = an alcohol + oxidized [NADPH--hemoprotein reductase] + H2O + H(+). In terms of biological role, enables the insect to feed on furanocoumarin-producing plants and evolved as an adaptation for detoxification of xanthotoxin and other furanocoumarins. This isozyme metabolizes isopimpinellin, imperatorin, and bergapten at high rates, xanthotoxin and psoralen at intermediate rates and angelicin, sphondin, and trioxsalen only at very low rates. The chain is Cytochrome P450 6B4 (CYP6B4) from Papilio glaucus (Eastern tiger swallowtail butterfly).